The chain runs to 311 residues: MTKLIFMGTPDFSATVLKGLLEDSHYHVLAVVTQPDRAVGRKKEIKMTPVKQLALEHGLKVYQPEKLSGSSEMVELMNLGADGIVTAAFGQFLPMILINSVDFAVNVHASLLPKYRGGAPIHYAIINGDKKAGVTIMEMVKEMDAGDMIAKASTPITDADDVGTMFEKLAIIGRDLLLQTLPGYLSGKIEPQAQDDSQATFSPNISSQEEKIDWSKSARDIFNQVRGMNPWPVAHTLLDGKRFKIYAVEVVNGAGNPGEIIEKTKKALIVAANQDALSLKLVQPAGKPKMSITDFLNGLGQKLKVGDYFGK.

110-113 serves as a coordination point for (6S)-5,6,7,8-tetrahydrofolate; that stretch reads SLLP.

This sequence belongs to the Fmt family.

It catalyses the reaction L-methionyl-tRNA(fMet) + (6R)-10-formyltetrahydrofolate = N-formyl-L-methionyl-tRNA(fMet) + (6S)-5,6,7,8-tetrahydrofolate + H(+). Functionally, attaches a formyl group to the free amino group of methionyl-tRNA(fMet). The formyl group appears to play a dual role in the initiator identity of N-formylmethionyl-tRNA by promoting its recognition by IF2 and preventing the misappropriation of this tRNA by the elongation apparatus. The polypeptide is Methionyl-tRNA formyltransferase (Streptococcus mutans serotype c (strain ATCC 700610 / UA159)).